The following is a 260-amino-acid chain: Malonyl-[acyl-carrier protein] O-methyltransferase (260 aa).

Belongs to the methyltransferase superfamily.

The enzyme catalyses malonyl-[ACP] + S-adenosyl-L-methionine = malonyl-[ACP] methyl ester + S-adenosyl-L-homocysteine. It functions in the pathway cofactor biosynthesis; biotin biosynthesis. Functionally, converts the free carboxyl group of a malonyl-thioester to its methyl ester by transfer of a methyl group from S-adenosyl-L-methionine (SAM). It allows to synthesize pimeloyl-ACP via the fatty acid synthetic pathway. The polypeptide is Malonyl-[acyl-carrier protein] O-methyltransferase (Haemophilus influenzae (strain ATCC 51907 / DSM 11121 / KW20 / Rd)).